Consider the following 185-residue polypeptide: Ribosome-recycling factor (185 aa).

The protein belongs to the RRF family.

The protein localises to the cytoplasm. In terms of biological role, responsible for the release of ribosomes from messenger RNA at the termination of protein biosynthesis. May increase the efficiency of translation by recycling ribosomes from one round of translation to another. This is Ribosome-recycling factor from Treponema denticola (strain ATCC 35405 / DSM 14222 / CIP 103919 / JCM 8153 / KCTC 15104).